The following is a 365-amino-acid chain: G-protein coupled receptor 68 (365 aa).

Residues 1-12 (MGNITADNSSMS) are Extracellular-facing. Asn3 and Asn8 each carry an N-linked (GlcNAc...) asparagine glycan. A helical membrane pass occupies residues 13–49 (CTIDHTIHQTLAPVVYVTVLVVGFPANCLSLYFGYLQ). Intrachain disulfides connect Cys13–Cys258 and Cys94–Cys172. At 50-53 (IKAR) the chain is on the cytoplasmic side. A helical transmembrane segment spans residues 54-84 (NELGVYLCNLTVADLFYICSLPFWLQYVLQH). At 85 to 89 (DNWSH) the chain is on the extracellular side. A helical transmembrane segment spans residues 90-125 (GDLSCQVCGILLYENIYISVGFLCCISVDRYLAVAH). Residues 126–133 (PFRFHQFR) are Cytoplasmic-facing. Residues 134–160 (TLKAAVGVSVVIWAKELLTSIYFLMHE) form a helical membrane-spanning segment. Residues 161 to 176 (EVIEDENQHRVCFEHY) lie on the Extracellular side of the membrane. The interval 161 to 176 (EVIEDENQHRVCFEHY) is extracellular loop 2 (ECL2). The helical transmembrane segment at 177 to 214 (PIQAWQRAINYYRFLVGFLFPICLLLASYQGILRAVRR) threads the bilayer. Topologically, residues 215–218 (SHGT) are cytoplasmic. The chain crosses the membrane as a helical span at residues 219–254 (QKSRKDQIQRLVLSTVVIFLACFLPYHVLLLVRSVW). The Extracellular segment spans residues 255–260 (EASCDF). The chain crosses the membrane as a helical span at residues 261–289 (AKGVFNAYHFSLLLTSFNCVADPVLYCFV). At 290–365 (SETTHRDLAR…SGGFPTGRLA (76 aa)) the chain is on the cytoplasmic side. Positions 345-365 (HPAFQTPNSPGSGGFPTGRLA) are disordered. Residues 355-365 (GSGGFPTGRLA) show a composition bias toward gly residues.

Belongs to the G-protein coupled receptor 1 family. As to expression, found at low level in a wide range of tissues, but significantly expressed in lung, kidney, bone and nervous system.

The protein localises to the cell membrane. With respect to regulation, activated by a network of residues that connects an extracellular-facing cavity to Glu-149, a conserved charged residue buried in the transmembrane core of the receptor. Protonation likely drives conformational changes in extracellular loop 2 (ECL2), which stabilizes movement of transmembrane 3 (TM3) and a series of rearrangements that connect the extracellular-facing cavity to Glu-149, a residue only conserved in proton-sensing G-protein coupled receptors. Activated in an allosteric manner by divalent metal ions at the extracellular surface following the order: Cd(2+) &gt; Co(2+) &gt; Ni(2+) &gt; Zn(2+) &gt; Fe(2+) &gt; Ca(2+) &gt; Mg(2+). Activated by the benzodiazepine drug lorazepam, a non-selective GPR68 positive allosteric modulator. Activated by ogerin (ZINC67740571), a selective GPR68 positive allosteric modulator. Activated by small molecule MS48107, a selective positive allosteric modulator. Inhibited by small molecule ogremorphin, inducing ferroptosis in cancer cells. Its function is as follows. Proton-sensing G-protein coupled receptor activated by extracellular pH, which is required to monitor pH changes and generate adaptive reactions. The receptor is almost silent at pH 7.8 but fully activated at pH 6.8. Ligand binding causes a conformation change that triggers signaling via guanine nucleotide-binding proteins (G proteins) and modulates the activity of downstream effectors, such as phospholipase C. GPR68 is mainly coupled to G(q) G proteins and mediates production of diacylglycerol (DAG) and inositol 1,4,5-trisphosphate (IP3). Acts as a key mechanosensor of fluid shear stress and membrane stretch. Expressed in endothelial cells of small-diameter resistance arteries, where it mediates flow-induced dilation in response to shear stress. May represents an osteoblastic pH sensor regulating cell-mediated responses to acidosis in bone. Acts as a regulator of calcium-sensing receptor CASR in a seesaw manner: GPR68-mediated signaling inhibits CASR signaling in response to protons, while CASR inhibits GPR68 in presence of extracellular calcium. The sequence is that of G-protein coupled receptor 68 from Homo sapiens (Human).